A 173-amino-acid polypeptide reads, in one-letter code: Translation initiation factor IF-3 (173 aa).

This sequence belongs to the IF-3 family. In terms of assembly, monomer.

The protein localises to the cytoplasm. Functionally, IF-3 binds to the 30S ribosomal subunit and shifts the equilibrium between 70S ribosomes and their 50S and 30S subunits in favor of the free subunits, thus enhancing the availability of 30S subunits on which protein synthesis initiation begins. This Bacillus subtilis (strain 168) protein is Translation initiation factor IF-3.